The chain runs to 373 residues: mRNA export factor rae-1 (373 aa).

N-acetylmethionine is present on M1. 4 WD repeats span residues 40 to 82 (APED…TFEG), 87 to 126 (NIPAPILDIAWIEDSSKIFIACADKEARLWDLASNQVAVV), 128 to 169 (THDG…NQTQ), and 276 to 315 (QEIYAVNDICFHPQHGTLVTIGSDGRYSMWDKDARTKLKT).

The protein belongs to the WD repeat rae1 family. As to quaternary structure, the nuclear pore complex (NPC) constitutes the exclusive means of nucleocytoplasmic transport. NPCs allow the passive diffusion of ions and small molecules and the active, nuclear transport receptor-mediated bidirectional transport of macromolecules such as proteins, RNAs, ribonucleoparticles (RNPs), and ribosomal subunits across the nuclear envelope. Interacts with rpm-1. As to expression, expressed along the ventral and dorsal nerve cords.

It is found in the nucleus. Its subcellular location is the nuclear pore complex. The protein localises to the cell projection. The protein resides in the axon. It localises to the synapse. Functionally, functions as a component of the nuclear pore complex (NPC). NPC components, collectively referred to as nucleoporins (NUPs), can play the role of both NPC structural components and of docking or interaction partners for transiently associated nuclear transport factors. It is specifically important for nuclear mRNA export. Has a role in neuronal development, where it acts downstream of rpm-1 to control axon termination and synapse formation in anterior lateral microtubule (ALM) and posterior lateral microtubule (PLM) mechanosensory neurons. The sequence is that of mRNA export factor rae-1 from Caenorhabditis elegans.